We begin with the raw amino-acid sequence, 172 residues long: Peptidyl-prolyl cis-trans isomerase (172 aa).

In terms of domain architecture, PPIase cyclophilin-type spans 7 to 170 (FFDMSVGGQP…KKVVVEDCGQ (164 aa)).

This sequence belongs to the cyclophilin-type PPIase family. Not glycosylated. Expressed in pollen.

The protein resides in the cytoplasm. The catalysed reaction is [protein]-peptidylproline (omega=180) = [protein]-peptidylproline (omega=0). Its activity is regulated as follows. Binds cyclosporin A (CsA). CsA mediates some of its effects via an inhibitory action on PPIase. PPIases accelerate the folding of proteins. It catalyzes the cis-trans isomerization of proline imidic peptide bonds in oligopeptides. The protein is Peptidyl-prolyl cis-trans isomerase (PCKR1) of Catharanthus roseus (Madagascar periwinkle).